Reading from the N-terminus, the 397-residue chain is MGCIKVISVFLAAVAAVDARAFFHNRGGNDVIPNSYIVVMKDGVTAEDFDSHISSVATTHSINKAKRGSETVGHKDSFNINGWRAYNGHFDEATIESILNDDKVDYVEHDRVVKLAALTTQPNAPTWGLGRVSHKAPGNKDFVYDSSAGQGVTIYGVDTGIDINHPEFRGRIRWGTNTVDNDNTDGNGHGTHTAGTFAGTTYGVAKKANIVAVKVLSAGGSGSTAGVIKGIDWCVTDAKAKGALGKAALNLSLGGAFSQANNDAVTRAQNAGIFVAVAAGNDNKDAKNSSPASAPAVCTAASSTIDDQKSSFSNWGTIVDIYAPGSNILSAAPGGGTRTLSGTSMASPHVCGVGAAMLAQGVSVAQACDRIKQIANAVIKNPGTGTTNKLLYNGSGR.

The N-terminal stretch at 1–19 is a signal peptide; that stretch reads MGCIKVISVFLAAVAAVDA. Positions 20 to 116 are excised as a propeptide; sequence RAFFHNRGGN…VEHDRVVKLA (97 aa). Residues 35 to 116 form the Inhibitor I9 domain; sequence SYIVVMKDGV…VEHDRVVKLA (82 aa). A Peptidase S8 domain is found at 126–397; sequence TWGLGRVSHK…NKLLYNGSGR (272 aa). Residues Asp158 and His189 each act as charge relay system in the active site. Asn250 carries N-linked (GlcNAc...) asparagine glycosylation. The active-site Charge relay system is the Ser344. An N-linked (GlcNAc...) asparagine glycan is attached at Asn393.

Belongs to the peptidase S8 family.

The protein resides in the secreted. Its function is as follows. Secreted subtilisin-like serine protease with keratinolytic activity that contributes to pathogenicity. The chain is Subtilisin-like protease 3 (SUB3) from Arthroderma otae (strain ATCC MYA-4605 / CBS 113480) (Microsporum canis).